The following is a 577-amino-acid chain: Monooxygenase PC-14 (577 aa).

The protein belongs to the FMO family. The cofactor is FAD.

It functions in the pathway secondary metabolite biosynthesis. Its function is as follows. Monooxygenase; part of the gene cluster that mediates the biosynthesis of the indole diterpenes penitrems. The geranylgeranyl diphosphate (GGPP) synthase penG catalyzes the first step in penitrem biosynthesis via conversion of farnesyl pyrophosphate and isopentyl pyrophosphate into geranylgeranyl pyrophosphate (GGPP). Condensation of indole-3-glycerol phosphate with GGPP by the prenyl transferase penC then forms 3-geranylgeranylindole (3-GGI). Epoxidation by the FAD-dependent monooxygenase penM leads to a epoxidized-GGI that is substrate of the terpene cyclase penB for cyclization to yield paspaline. Paspaline is subsequently converted to 13-desoxypaxilline by the cytochrome P450 monooxygenase penP, the latter being then converted to paxilline by the cytochrome P450 monooxygenase penQ. Paxilline is converted to beta-paxitriol via C-10 ketoreduction by the short-chain dehydrogenase PC-15 which can be monoprenylated at the C-20 by the indole diterpene prenyltransferase penD. A two-step elimination (acetylation and elimination) process performed by the O-acetyltransferase PC-16 and the P.simplicissimum ptmI-ortholog not yet identified in P.crustosum, leads to the production of the prenylated form of penijanthine. The FAD-linked oxidoreductase ptmO then converts the prenylated form of penijanthine into PC-M5 which is in turn transformed into PC-M4 by the aromatic dimethylallyltransferase PC-22. A series of oxidation steps involving 4 cytochrome P450 monooxygenases (PC-21, PC-05, PC-23, PC-20) and a FAD-dependent monooxygenase (PC-14) are required for the transformation of PC-M4 to penitrems A and E. Synthesis of these final products is proposed to proceed via penitrems D and C (PC-21, PC-05, PC-14) and penitrems B and F (PC-21, PC-05, PC-14, PC-23). The polypeptide is Monooxygenase PC-14 (Penicillium crustosum (Blue mold fungus)).